Reading from the N-terminus, the 170-residue chain is tRNA-specific adenosine deaminase 2 (170 aa).

The 126-residue stretch at 3–128 (EEIQNWMHKA…SVLNVAGDNI (126 aa)) folds into the CMP/dCMP-type deaminase domain. His54 lines the Zn(2+) pocket. Glu56 serves as the catalytic Proton donor. Zn(2+)-binding residues include Cys90 and Cys93.

This sequence belongs to the cytidine and deoxycytidylate deaminase family. ADAT2 subfamily. It depends on Zn(2+) as a cofactor.

It carries out the reaction adenosine(34) in tRNA + H2O + H(+) = inosine(34) in tRNA + NH4(+). Its function is as follows. Probably participates in deamination of adenosine-34 to inosine in many tRNAs. The chain is tRNA-specific adenosine deaminase 2 (adat2) from Xenopus tropicalis (Western clawed frog).